A 146-amino-acid polypeptide reads, in one-letter code: Flavodoxin (146 aa).

In terms of domain architecture, Flavodoxin-like spans 4–143 (ALIVYGSTTG…EVLDWAREVL (140 aa)).

The protein belongs to the flavodoxin family. FMN serves as cofactor.

Electron-transfer proteins that function in various electron transport systems in microorganisms. Functionally interchangeable with ferredoxin. This chain is Flavodoxin, found in Megalodesulfovibrio gigas (strain ATCC 19364 / DSM 1382 / NCIMB 9332 / VKM B-1759) (Desulfovibrio gigas).